Consider the following 389-residue polypeptide: Chalcone synthase 1 (389 aa).

C163 is a catalytic residue.

It belongs to the thiolase-like superfamily. Chalcone/stilbene synthases family.

It catalyses the reaction (E)-4-coumaroyl-CoA + 3 malonyl-CoA + 3 H(+) = 2',4,4',6'-tetrahydroxychalcone + 3 CO2 + 4 CoA. The protein operates within secondary metabolite biosynthesis; flavonoid biosynthesis. The primary product of this enzyme is 4,2',4',6'-tetrahydroxychalcone (also termed naringenin-chalcone or chalcone) which can under specific conditions spontaneously isomerize into naringenin. This Citrus sinensis (Sweet orange) protein is Chalcone synthase 1 (CHS1).